Consider the following 282-residue polypeptide: Acetyl-coenzyme A carboxylase carboxyl transferase subunit beta (282 aa).

The region spanning 29 to 282 is the CoA carboxyltransferase N-terminal domain; the sequence is LMKRCPNCGL…LLKYGGMQDD (254 aa). Cys-33, Cys-36, Cys-51, and Cys-54 together coordinate Zn(2+). Residues 33-54 form a C4-type zinc finger; that stretch reads CPNCGLEFFARRLDKYKTCPDC.

This sequence belongs to the AccD/PCCB family. As to quaternary structure, acetyl-CoA carboxylase is a heterohexamer composed of biotin carboxyl carrier protein (AccB), biotin carboxylase (AccC) and two subunits each of ACCase subunit alpha (AccA) and ACCase subunit beta (AccD). Zn(2+) is required as a cofactor.

The protein resides in the cytoplasm. It carries out the reaction N(6)-carboxybiotinyl-L-lysyl-[protein] + acetyl-CoA = N(6)-biotinyl-L-lysyl-[protein] + malonyl-CoA. The protein operates within lipid metabolism; malonyl-CoA biosynthesis; malonyl-CoA from acetyl-CoA: step 1/1. Its function is as follows. Component of the acetyl coenzyme A carboxylase (ACC) complex. Biotin carboxylase (BC) catalyzes the carboxylation of biotin on its carrier protein (BCCP) and then the CO(2) group is transferred by the transcarboxylase to acetyl-CoA to form malonyl-CoA. This is Acetyl-coenzyme A carboxylase carboxyl transferase subunit beta from Lactobacillus delbrueckii subsp. bulgaricus (strain ATCC 11842 / DSM 20081 / BCRC 10696 / JCM 1002 / NBRC 13953 / NCIMB 11778 / NCTC 12712 / WDCM 00102 / Lb 14).